Here is a 534-residue protein sequence, read N- to C-terminus: CTP synthase (534 aa).

The tract at residues 1–266 (MKQKFIFVTG…DELIVARLGL (266 aa)) is amidoligase domain. Position 14 (serine 14) interacts with CTP. Position 14 (serine 14) interacts with UTP. ATP contacts are provided by residues 15 to 20 (SIGKGL) and aspartate 72. The Mg(2+) site is built by aspartate 72 and glutamate 140. CTP is bound by residues 147-149 (DIE), 187-192 (KSKPTQ), and lysine 223. UTP is bound by residues 187–192 (KSKPTQ) and lysine 223. The 244-residue stretch at 291–534 (KIGVVGKYVD…HFVKASLKKK (244 aa)) folds into the Glutamine amidotransferase type-1 domain. Position 353 (glycine 353) interacts with L-glutamine. The active-site Nucleophile; for glutamine hydrolysis is cysteine 380. Residues 381 to 384 (FGMQ), glutamate 404, and arginine 464 contribute to the L-glutamine site. Active-site residues include histidine 509 and glutamate 511.

The protein belongs to the CTP synthase family. As to quaternary structure, homotetramer.

It carries out the reaction UTP + L-glutamine + ATP + H2O = CTP + L-glutamate + ADP + phosphate + 2 H(+). It catalyses the reaction L-glutamine + H2O = L-glutamate + NH4(+). The enzyme catalyses UTP + NH4(+) + ATP = CTP + ADP + phosphate + 2 H(+). Its pathway is pyrimidine metabolism; CTP biosynthesis via de novo pathway; CTP from UDP: step 2/2. Its activity is regulated as follows. Allosterically activated by GTP, when glutamine is the substrate; GTP has no effect on the reaction when ammonia is the substrate. The allosteric effector GTP functions by stabilizing the protein conformation that binds the tetrahedral intermediate(s) formed during glutamine hydrolysis. Inhibited by the product CTP, via allosteric rather than competitive inhibition. Its function is as follows. Catalyzes the ATP-dependent amination of UTP to CTP with either L-glutamine or ammonia as the source of nitrogen. Regulates intracellular CTP levels through interactions with the four ribonucleotide triphosphates. The chain is CTP synthase from Bdellovibrio bacteriovorus (strain ATCC 15356 / DSM 50701 / NCIMB 9529 / HD100).